Consider the following 216-residue polypeptide: Transmembrane emp24 domain-containing protein eca (216 aa).

A signal peptide spans 1–20; that stretch reads MRDQFISLALILCVLHSACG. The Lumenal portion of the chain corresponds to 21 to 182; the sequence is LYFHISETER…FRHTSESTNS (162 aa). The 97-residue stretch at 30 to 126 folds into the GOLD domain; the sequence is RKCFIEEVPD…QLRVHLDIQV (97 aa). Positions 134–164 form a coiled coil; sequence ANVAQKEKLTELQLRIRQLLDQVEQITKEQN. Residues 183–203 form a helical membrane-spanning segment; the sequence is RVLWWSLAQTVVLVCMGFWQM. Topologically, residues 204–216 are cytoplasmic; sequence RHLKSFFEAKKLV. Positions 213–216 match the Prevents secretion from ER motif; sequence KKLV.

Belongs to the EMP24/GP25L family.

The protein localises to the endoplasmic reticulum membrane. Its function is as follows. Eca and bai are essential, though not redundant, for dorsoventral patterning of the embryo. Specifically required during early embryogenesis for the activity of maternal tkv, while the zygotic tkv is not affected. Involved in Golgi organization. The polypeptide is Transmembrane emp24 domain-containing protein eca (Drosophila simulans (Fruit fly)).